A 336-amino-acid polypeptide reads, in one-letter code: Glycerol-3-phosphate dehydrogenase [NAD(P)+] (336 aa).

NADPH is bound by residues S11, W12, R32, and K106. Residues K106 and G136 each coordinate sn-glycerol 3-phosphate. Position 140 (A140) interacts with NADPH. 5 residues coordinate sn-glycerol 3-phosphate: K191, D244, S254, R255, and N256. K191 acts as the Proton acceptor in catalysis. R255 is a binding site for NADPH. Positions 279 and 281 each coordinate NADPH.

The protein belongs to the NAD-dependent glycerol-3-phosphate dehydrogenase family.

The protein resides in the cytoplasm. It carries out the reaction sn-glycerol 3-phosphate + NAD(+) = dihydroxyacetone phosphate + NADH + H(+). It catalyses the reaction sn-glycerol 3-phosphate + NADP(+) = dihydroxyacetone phosphate + NADPH + H(+). It functions in the pathway membrane lipid metabolism; glycerophospholipid metabolism. Catalyzes the reduction of the glycolytic intermediate dihydroxyacetone phosphate (DHAP) to sn-glycerol 3-phosphate (G3P), the key precursor for phospholipid synthesis. The sequence is that of Glycerol-3-phosphate dehydrogenase [NAD(P)+] from Frankia casuarinae (strain DSM 45818 / CECT 9043 / HFP020203 / CcI3).